The following is a 303-amino-acid chain: Methionyl-tRNA formyltransferase (303 aa).

(6S)-5,6,7,8-tetrahydrofolate is bound at residue S108–P111.

It belongs to the Fmt family.

It carries out the reaction L-methionyl-tRNA(fMet) + (6R)-10-formyltetrahydrofolate = N-formyl-L-methionyl-tRNA(fMet) + (6S)-5,6,7,8-tetrahydrofolate + H(+). Functionally, attaches a formyl group to the free amino group of methionyl-tRNA(fMet). The formyl group appears to play a dual role in the initiator identity of N-formylmethionyl-tRNA by promoting its recognition by IF2 and preventing the misappropriation of this tRNA by the elongation apparatus. This Rickettsia prowazekii (strain Madrid E) protein is Methionyl-tRNA formyltransferase.